The sequence spans 90 residues: DNA-binding protein HU (90 aa).

It belongs to the bacterial histone-like protein family. In terms of assembly, homodimer.

In terms of biological role, histone-like DNA-binding protein which is capable of wrapping DNA to stabilize it, and thus to prevent its denaturation under extreme environmental conditions. This is DNA-binding protein HU (hup) from Staphylococcus aureus (strain COL).